Consider the following 370-residue polypeptide: Developmentally-regulated GTP-binding protein 1 homolog (370 aa).

Residues 65–292 form the OBG-type G domain; that stretch reads ARVGLIGFPS…LLDKIWEYLK (228 aa). GTP is bound by residues 71–78, 117–121, and 250–253; these read GFPSVGKS, DLPGI, and NKID. In terms of domain architecture, TGS spans 292–369; that stretch reads KLIRVYTKPK…ADEDIVQIVK (78 aa).

Belongs to the TRAFAC class OBG-HflX-like GTPase superfamily. OBG GTPase family.

The chain is Developmentally-regulated GTP-binding protein 1 homolog (drg1) from Dictyostelium discoideum (Social amoeba).